Here is a 219-residue protein sequence, read N- to C-terminus: Oligoribonuclease (219 aa).

One can recognise an Exonuclease domain in the interval 19–184; that stretch reads LVWVDLEMTG…ADIVESIREL (166 aa). Y141 is an active-site residue.

This sequence belongs to the oligoribonuclease family.

It localises to the cytoplasm. 3'-to-5' exoribonuclease specific for small oligoribonucleotides. This is Oligoribonuclease from Corynebacterium glutamicum (strain R).